The following is a 107-amino-acid chain: Insulin (107 aa).

A signal peptide spans 1–24 (MALWIRSLPLLALLVFSGPGTSYA). 3 cysteine pairs are disulfide-bonded: Cys-31/Cys-93, Cys-43/Cys-106, and Cys-92/Cys-97. The propeptide at 57 to 84 (DVEQPLVSSPLRGEAGVLPFQQEEYEKV) is c peptide.

Belongs to the insulin family. In terms of assembly, heterodimer of a B chain and an A chain linked by two disulfide bonds.

It is found in the secreted. Insulin decreases blood glucose concentration. It increases cell permeability to monosaccharides, amino acids and fatty acids. It accelerates glycolysis, the pentose phosphate cycle, and glycogen synthesis in liver. This chain is Insulin (INS), found in Gallus gallus (Chicken).